The following is an 819-amino-acid chain: Nuclear pore complex protein Nup93 (819 aa).

Position 49 is a phosphothreonine (threonine 49). Phosphoserine occurs at positions 52, 66, 72, 75, 80, 430, and 767.

This sequence belongs to the nucleoporin interacting component (NIC) family. As to quaternary structure, part of the nuclear pore complex (NPC). Component of the p62 complex, a complex composed of NUP62 and NUP54. Forms a complex with NUP35, NUP155, NUP205 and lamin B; the interaction with NUP35 is direct. Does not interact with TPR. Interacts with SMAD4 and IPO7; translocates SMAD4 to the nucleus through the NPC upon BMP7 stimulation resulting in activation of SMAD4 signaling.

It is found in the nucleus membrane. The protein resides in the nucleus. Its subcellular location is the nuclear pore complex. It localises to the nucleus envelope. Its function is as follows. Plays a role in the nuclear pore complex (NPC) assembly and/or maintenance. May anchor nucleoporins, but not NUP153 and TPR, to the NPC. During renal development, regulates podocyte migration and proliferation through SMAD4 signaling. The chain is Nuclear pore complex protein Nup93 (NUP93) from Bos taurus (Bovine).